A 455-amino-acid chain; its full sequence is Adenylyltransferase and sulfurtransferase MOCS3 (455 aa).

Residues Gly-90, Asp-111, 118-122 (SNLAR), Lys-135, and 179-180 (DN) each bind ATP. Residues 156–236 (AQALTPATAL…QPPPAETVTN (81 aa)) are interaction with NFS1. Zn(2+) is bound by residues Cys-220 and Cys-223. Catalysis depends on Cys-237, which acts as the Glycyl thioester intermediate; for adenylyltransferase activity. Cys-295 and Cys-298 together coordinate Zn(2+). Cys-314 and Cys-322 are joined by a disulfide. The Rhodanese domain occupies 345 to 453 (SGSPHLLLDV…WAAKVDGTFP (109 aa)). The active-site Cysteine persulfide intermediate; for sulfurtransferase activity is the Cys-410. Cys-410 carries the post-translational modification Cysteine persulfide.

This sequence in the N-terminal section; belongs to the HesA/MoeB/ThiF family. UBA4 subfamily. Interacts with NFS1. Requires Zn(2+) as cofactor.

It is found in the cytoplasm. The protein localises to the cytosol. The enzyme catalyses [molybdopterin-synthase sulfur-carrier protein]-C-terminal Gly-Gly + ATP + H(+) = [molybdopterin-synthase sulfur-carrier protein]-C-terminal Gly-Gly-AMP + diphosphate. It catalyses the reaction [molybdopterin-synthase sulfur-carrier protein]-C-terminal Gly-Gly-AMP + S-sulfanyl-L-cysteinyl-[cysteine desulfurase] + AH2 = [molybdopterin-synthase sulfur-carrier protein]-C-terminal-Gly-aminoethanethioate + L-cysteinyl-[cysteine desulfurase] + A + AMP + 2 H(+). The protein operates within tRNA modification; 5-methoxycarbonylmethyl-2-thiouridine-tRNA biosynthesis. It participates in cofactor biosynthesis; molybdopterin biosynthesis. In terms of biological role, plays a central role in 2-thiolation of mcm(5)S(2)U at tRNA wobble positions of cytosolic tRNA(Lys), tRNA(Glu) and tRNA(Gln). Also essential during biosynthesis of the molybdenum cofactor. Acts by mediating the C-terminal thiocarboxylation of sulfur carriers URM1 and MOCS2A. Its N-terminus first activates URM1 and MOCS2A as acyl-adenylates (-COAMP), then the persulfide sulfur on the catalytic cysteine is transferred to URM1 and MOCS2A to form thiocarboxylation (-COSH) of their C-terminus. The reaction probably involves hydrogen sulfide that is generated from the persulfide intermediate and that acts as a nucleophile towards URM1 and MOCS2A. Subsequently, a transient disulfide bond is formed. Does not use thiosulfate as sulfur donor; NFS1 acting as a sulfur donor for thiocarboxylation reactions. This chain is Adenylyltransferase and sulfurtransferase MOCS3, found in Sus scrofa (Pig).